Reading from the N-terminus, the 413-residue chain is Multifunctional CCA protein (413 aa).

ATP-binding residues include Gly8 and Arg11. CTP contacts are provided by Gly8 and Arg11. Mg(2+)-binding residues include Asp21 and Asp23. Arg91, Arg137, and Arg140 together coordinate ATP. Arg91, Arg137, and Arg140 together coordinate CTP. One can recognise an HD domain in the interval 228–329; it reads TGIHTLMVLE…VKLFDKADLW (102 aa).

The protein belongs to the tRNA nucleotidyltransferase/poly(A) polymerase family. Bacterial CCA-adding enzyme type 1 subfamily. Monomer. Can also form homodimers and oligomers. It depends on Mg(2+) as a cofactor. The cofactor is Ni(2+).

It catalyses the reaction a tRNA precursor + 2 CTP + ATP = a tRNA with a 3' CCA end + 3 diphosphate. The catalysed reaction is a tRNA with a 3' CCA end + 2 CTP + ATP = a tRNA with a 3' CCACCA end + 3 diphosphate. Functionally, catalyzes the addition and repair of the essential 3'-terminal CCA sequence in tRNAs without using a nucleic acid template. Adds these three nucleotides in the order of C, C, and A to the tRNA nucleotide-73, using CTP and ATP as substrates and producing inorganic pyrophosphate. tRNA 3'-terminal CCA addition is required both for tRNA processing and repair. Also involved in tRNA surveillance by mediating tandem CCA addition to generate a CCACCA at the 3' terminus of unstable tRNAs. While stable tRNAs receive only 3'-terminal CCA, unstable tRNAs are marked with CCACCA and rapidly degraded. The polypeptide is Multifunctional CCA protein (Shewanella loihica (strain ATCC BAA-1088 / PV-4)).